The primary structure comprises 410 residues: Platelet-activating factor acetylhydrolase IB subunit alpha (410 aa).

The interval 1-38 is required for self-association and interaction with PAFAH1B2 and PAFAH1B3; sequence MVLSQRQRDELNRAIADYLRSNGYEEAYSVFKKEAELD. The segment at 1-66 is interaction with NDE1; the sequence is MVLSQRQRDE…SVIRLQKKVM (66 aa). Positions 1-102 are interaction with NDEL1; it reads MVLSQRQRDE…EWIPRPPEKY (102 aa). One can recognise a LisH domain in the interval 7–39; sequence QRDELNRAIADYLRSNGYEEAYSVFKKEAELDM. N6-acetyllysine is present on Lys-53. The stretch at 56-82 forms a coiled coil; that stretch reads TSVIRLQKKVMELESKLNEAKEEFTSG. Positions 83-410 are interaction with dynein and dynactin; it reads GPLGQKRDPK…DQTVKVWECR (328 aa). 7 WD repeats span residues 106–147, 148–187, 190–229, 232–271, 274–333, 336–377, and 378–410; these read GHRS…RTLK, GHTD…CIRT, GHDH…CVKT, GHRE…CKAE, EHEH…CLMT, GHDN…KTLN, and AHEH…WECR. Ser-109 carries the phosphoserine modification. The interval 367 to 409 is interaction with DCX; it reads YKNKRCMKTLNAHEHFVTSLDFHKTAPYVVTGSVDQTVKVWEC. An interaction with NDEL1 region spans residues 388-410; sequence FHKTAPYVVTGSVDQTVKVWECR.

Belongs to the WD repeat LIS1/nudF family. As to quaternary structure, can self-associate. Component of the cytosolic PAF-AH (I) heterotetrameric enzyme, which is composed of PAFAH1B1 (beta), PAFAH1B2 (alpha2) and PAFAH1B3 (alpha1) subunits. The catalytic activity of the enzyme resides in the alpha1 (PAFAH1B3) and alpha2 (PAFAH1B2) subunits, whereas the beta subunit (PAFAH1B1) has regulatory activity. Trimer formation is not essential for the catalytic activity. Interacts with the catalytic dimer of PAF-AH (I) heterotetrameric enzyme: interacts with PAFAH1B2 homodimer (alpha2/alpha2 homodimer), PAFAH1B3 homodimer (alpha1/alpha1 homodimer) and PAFAH1B2-PAFAH1B3 heterodimer (alpha2/alpha1 heterodimer). Interacts with DCX, dynein, dynactin, IQGAP1, KATNB1, NDE1, NDEL1, NUDC and RSN. Interacts with DISC1, and this interaction is enhanced by NDEL1. Interacts with DAB1 when DAB1 is phosphorylated in response to RELN/reelin signaling. Interacts with INTS13. Interacts with DCDC1.

It is found in the cytoplasm. Its subcellular location is the cytoskeleton. The protein localises to the microtubule organizing center. It localises to the centrosome. The protein resides in the spindle. It is found in the nucleus membrane. In terms of biological role, regulatory subunit (beta subunit) of the cytosolic type I platelet-activating factor (PAF) acetylhydrolase (PAF-AH (I)), an enzyme that catalyzes the hydrolyze of the acetyl group at the sn-2 position of PAF and its analogs and participates in PAF inactivation. Regulates the PAF-AH (I) activity in a catalytic dimer composition-dependent manner. Positively regulates the activity of the minus-end directed microtubule motor protein dynein. May enhance dynein-mediated microtubule sliding by targeting dynein to the microtubule plus end. Required for several dynein- and microtubule-dependent processes such as the maintenance of Golgi integrity, the peripheral transport of microtubule fragments and the coupling of the nucleus and centrosome. Required during brain development for the proliferation of neuronal precursors and the migration of newly formed neurons from the ventricular/subventricular zone toward the cortical plate. Neuronal migration involves a process called nucleokinesis, whereby migrating cells extend an anterior process into which the nucleus subsequently translocates. During nucleokinesis dynein at the nuclear surface may translocate the nucleus towards the centrosome by exerting force on centrosomal microtubules. Also required for proper activation of Rho GTPases and actin polymerization at the leading edge of locomoting cerebellar neurons and postmigratory hippocampal neurons in response to calcium influx triggered via NMDA receptors. May also play a role in other forms of cell locomotion including the migration of fibroblasts during wound healing. Required for dynein recruitment to microtubule plus ends and BICD2-bound cargos. May modulate the Reelin pathway through interaction of the PAF-AH (I) catalytic dimer with VLDLR. The protein is Platelet-activating factor acetylhydrolase IB subunit alpha of Macaca fascicularis (Crab-eating macaque).